The sequence spans 253 residues: uncharacterized protein (253 aa).

The segment covering 1-14 has biased composition (low complexity); sequence MKVPILSRLRSLSS. Disordered regions lie at residues 1 to 192 and 212 to 253; these read MKVP…PKSS and PETV…AIQL. Basic and acidic residues-rich tracts occupy residues 17–30 and 45–60; these read RNNEEKNVDMEHQV and KSDKNNKHDKHDKSGE. Composition is skewed to low complexity over residues 63 to 104 and 111 to 154; these read PSTP…GSDS and KTLS…QTPR. The segment covering 215 to 235 has biased composition (polar residues); that stretch reads VVTSTPRQQSRPPSAQNTPNF. The span at 236-253 shows a compositional bias: low complexity; sequence TSQGGSRSTSRRQSAIQL.

This is an uncharacterized protein from Dictyostelium discoideum (Social amoeba).